A 451-amino-acid polypeptide reads, in one-letter code: Phosphoglucosamine mutase (451 aa).

The Phosphoserine intermediate role is filled by Ser101. Mg(2+) contacts are provided by Ser101, Asp240, Asp242, and Asp244. Ser101 is subject to Phosphoserine.

Belongs to the phosphohexose mutase family. Requires Mg(2+) as cofactor. Activated by phosphorylation.

The enzyme catalyses alpha-D-glucosamine 1-phosphate = D-glucosamine 6-phosphate. Its function is as follows. Catalyzes the conversion of glucosamine-6-phosphate to glucosamine-1-phosphate. This is Phosphoglucosamine mutase from Alkalilimnicola ehrlichii (strain ATCC BAA-1101 / DSM 17681 / MLHE-1).